Consider the following 132-residue polypeptide: Holo-[acyl-carrier-protein] synthase (132 aa).

2 residues coordinate Mg(2+): Asp13 and Glu63.

This sequence belongs to the P-Pant transferase superfamily. AcpS family. The cofactor is Mg(2+).

The protein resides in the cytoplasm. It catalyses the reaction apo-[ACP] + CoA = holo-[ACP] + adenosine 3',5'-bisphosphate + H(+). Transfers the 4'-phosphopantetheine moiety from coenzyme A to a Ser of acyl-carrier-protein. This chain is Holo-[acyl-carrier-protein] synthase, found in Gloeobacter violaceus (strain ATCC 29082 / PCC 7421).